We begin with the raw amino-acid sequence, 361 residues long: (S)-coclaurine N-methyltransferase (361 aa).

S-adenosyl-L-methionine is bound by residues serine 101, glycine 139, asparagine 163, glutamine 167, aspartate 189, isoleucine 190, and valine 205. Residue cysteine 336 is part of the active site.

It belongs to the CFA/CMAS family. As to quaternary structure, homodimer. Highly expressed in rhizomes. Detected in roots, petioles, flower buds and leaves. Expressed between the developing stele and ground tissues near the root apical meristem, in the immature endodermis, the pericycle and the spokes of developing xylem in the apical region of the root and in the protoderm of leaf primordia in rhizomes.

The protein resides in the cytoplasm. The enzyme catalyses norreticuline + S-adenosyl-L-methionine = reticuline + S-adenosyl-L-homocysteine + H(+). It catalyses the reaction (S)-coclaurine + S-adenosyl-L-methionine = (S)-N-methylcoclaurine + S-adenosyl-L-homocysteine + H(+). The catalysed reaction is heliamine + S-adenosyl-L-methionine = N-methylheliamine + S-adenosyl-L-homocysteine + H(+). Its pathway is alkaloid biosynthesis. Functionally, involved in the biosynthesis of protoberberine alkaloids. N-methyltransferase with a substrate preference for (R,S)-norreticuline but also active with dimethoxytetrahydroisoquinoline. This Thalictrum flavum subsp. glaucum (Yellow meadow rue) protein is (S)-coclaurine N-methyltransferase.